A 555-amino-acid polypeptide reads, in one-letter code: Protein NRT1/ PTR FAMILY 5.4 (555 aa).

The next 2 helical transmembrane spans lie at 18 to 38 and 62 to 82; these read AALFIIVVEIAERFAFYGLAS and WIGVSCMFPILGAFLADSILG. A Phosphothreonine modification is found at Thr86. A run of 10 helical transmembrane segments spans residues 87 to 107, 116 to 136, 159 to 179, 187 to 207, 311 to 331, 348 to 368, 392 to 412, 435 to 455, 470 to 490, and 516 to 536; these read VLLTSFIYLLGIVMLPLSVTV, VFFMALYVMAVGEGGHKPCVM, NYWYMAIVLASSIAVLALIFI, LGFSIIAGSVVIAIVIFLIGI, IPIWISLIMFCATLTQLNTFF, IPPAAFQSIVGVTILILIPLY, IGVGLFVATFNMVICGLVEAK, LWLLPQYILVGIGDVFTIVGM, IGAAIFISVVGVGSFVSTGII, and YYYWIIASLNAVSLCFYLFIA.

The protein belongs to the major facilitator superfamily. Proton-dependent oligopeptide transporter (POT/PTR) (TC 2.A.17) family. Expressed in roots and flowers.

Its subcellular location is the membrane. The sequence is that of Protein NRT1/ PTR FAMILY 5.4 (NPF5.4) from Arabidopsis thaliana (Mouse-ear cress).